The primary structure comprises 166 residues: Probable glucosamine 6-phosphate N-acetyltransferase 2 (166 aa).

The N-acetyltransferase domain maps to 21-166; sequence VQIRRLEATD…EKGVQMAIYF (146 aa). Residues S43, 93-96, and 105-107 contribute to the substrate site; these read KFLR and EDV. 115–120 contacts acetyl-CoA; that stretch reads GRGLGL. 136–137 contacts substrate; it reads YK. Acetyl-CoA is bound at residue 150–152; sequence YAK.

Belongs to the acetyltransferase family. GNA1 subfamily. In terms of assembly, homodimer.

It localises to the endoplasmic reticulum membrane. The catalysed reaction is D-glucosamine 6-phosphate + acetyl-CoA = N-acetyl-D-glucosamine 6-phosphate + CoA + H(+). The protein operates within nucleotide-sugar biosynthesis; UDP-N-acetyl-alpha-D-glucosamine biosynthesis; N-acetyl-alpha-D-glucosamine 1-phosphate from alpha-D-glucosamine 6-phosphate (route I): step 1/2. Acetyltransferase involved in UDP-N-acetylglucosamine (UDP-GlcNAc) biosynthesis. UDP-GlcNAc is an essential metabolite that serves as an initial sugar donor of N-glycan synthesis and thus plays an important role in protein and lipid glycosylation. The polypeptide is Probable glucosamine 6-phosphate N-acetyltransferase 2 (Oryza sativa subsp. japonica (Rice)).